The primary structure comprises 160 residues: Lymphocyte antigen 86 (160 aa).

The first 20 residues, 1–20 (MKTLNVLALVLVLLCINAST), serve as a signal peptide directing secretion. Cystine bridges form between cysteine 28–cysteine 53, cysteine 40–cysteine 149, and cysteine 97–cysteine 107.

M-shaped tetramer of two CD180-LY86 heterodimers. Detected in the macrophage-like 10.4 cells.

The protein localises to the secreted. It localises to the extracellular space. May cooperate with CD180 and TLR4 to mediate the innate immune response to bacterial lipopolysaccharide (LPS) and cytokine production. Important for efficient CD180 cell surface expression. The polypeptide is Lymphocyte antigen 86 (LY86) (Gallus gallus (Chicken)).